A 157-amino-acid chain; its full sequence is MFDVLMYLFETYIHTEAELRVDQDKLEQDLTDAGFDREDIYNALLWLEKLADYQEGLTEPMQLASDPLSMRIYTPEECERLDASCRGFLLFLEQIQVLNLEIREMVIERVLALDTAEFDLEDLKWVILMVLFNIPGCENAYQQMEELLFEVNEGMLH.

The protein belongs to the Smg family.

This is Protein Smg from Shigella boydii serotype 18 (strain CDC 3083-94 / BS512).